A 261-amino-acid chain; its full sequence is Ribosomal RNA small subunit methyltransferase G (261 aa).

S-adenosyl-L-methionine is bound by residues G94, L99, 117–119 (EST), 145–146 (VE), and R164.

Belongs to the methyltransferase superfamily. RNA methyltransferase RsmG family.

The protein localises to the cytoplasm. Functionally, specifically methylates the N7 position of a guanine in 16S rRNA. The sequence is that of Ribosomal RNA small subunit methyltransferase G from Rubrobacter xylanophilus (strain DSM 9941 / JCM 11954 / NBRC 16129 / PRD-1).